A 669-amino-acid chain; its full sequence is Major S-layer protein (669 aa).

Positions 1 to 24 (MKRFAAVSLAALMLLTVFASAASA) are cleaved as a signal peptide. N-linked (GlcNAc...) asparagine glycosylation is found at Asn-36, Asn-70, Asn-116, Asn-600, and Asn-607. The interval 588–648 (DGEVVDDDED…PTEADGTTPG (61 aa)) is disordered. A compositionally biased stretch (acidic residues) spans 590–627 (EVVDDDEDDDNVTEPVDNDTEVEEPTEEPTEGPTEEPT). Residues 645–665 (TTPGFGVVLGLVGLLAVVYLV) traverse the membrane as a helical segment.

The protein belongs to the Methanosarcinales S-layer protein family. In terms of processing, glycosylated.

It is found in the secreted. The protein localises to the cell wall. It localises to the S-layer. Its subcellular location is the cell membrane. Functionally, S-layer protein. The S-layer is a paracrystalline mono-layered assembly of proteins which coat the surface of the cell. The protein is Major S-layer protein of Methanosarcina mazei (strain ATCC BAA-159 / DSM 3647 / Goe1 / Go1 / JCM 11833 / OCM 88) (Methanosarcina frisia).